Reading from the N-terminus, the 283-residue chain is Urease accessory protein UreD (283 aa).

The protein belongs to the UreD family. As to quaternary structure, ureD, UreF and UreG form a complex that acts as a GTP-hydrolysis-dependent molecular chaperone, activating the urease apoprotein by helping to assemble the nickel containing metallocenter of UreC. The UreE protein probably delivers the nickel.

It is found in the cytoplasm. Its function is as follows. Required for maturation of urease via the functional incorporation of the urease nickel metallocenter. The sequence is that of Urease accessory protein UreD from Rhodopseudomonas palustris (strain BisB5).